Consider the following 75-residue polypeptide: Sec-independent protein translocase protein TatA (75 aa).

The chain crosses the membrane as a helical span at residues 1 to 21 (MGSFSIWHWLIVLVIIALVFG). Residues 45–75 (DASADKPADQVTQQRVSDDTIDVQAKEKSNS) form a disordered region.

It belongs to the TatA/E family. The Tat system comprises two distinct complexes: a TatABC complex, containing multiple copies of TatA, TatB and TatC subunits, and a separate TatA complex, containing only TatA subunits. Substrates initially bind to the TatABC complex, which probably triggers association of the separate TatA complex to form the active translocon.

Its subcellular location is the cell inner membrane. Its function is as follows. Part of the twin-arginine translocation (Tat) system that transports large folded proteins containing a characteristic twin-arginine motif in their signal peptide across membranes. TatA could form the protein-conducting channel of the Tat system. The polypeptide is Sec-independent protein translocase protein TatA (Bordetella bronchiseptica (strain ATCC BAA-588 / NCTC 13252 / RB50) (Alcaligenes bronchisepticus)).